The following is a 33-amino-acid chain: Glutaminase-asparaginase (33 aa).

The Asparaginase/glutaminase domain occupies 1-33 (NVVVLATGGTIAGAGTNAFASQXGPLGMVVEGK). Residue threonine 10 is the Acyl-ester intermediate of the active site.

Belongs to the asparaginase 1 family. Homotetramer.

It localises to the periplasm. It carries out the reaction L-glutamine + H2O = L-glutamate + NH4(+). It catalyses the reaction L-asparagine + H2O = L-aspartate + NH4(+). In Delftia acidovorans (Pseudomonas acidovorans), this protein is Glutaminase-asparaginase (ansB).